A 221-amino-acid polypeptide reads, in one-letter code: Transcription repressor OFP8 (221 aa).

A compositionally biased stretch (acidic residues) spans 124-138 (EDEGDKEESEDDDSD). Positions 124–147 (EDEGDKEESEDDDSDTLFSSRSFS) are disordered. One can recognise an OVATE domain in the interval 158–217 (VVKKSKDPYEDFRTSMVEMIVERQIFAPAELQQLLQCFLSLNSRQHHKVIVQVFLEIYAT).

Expressed in roots, rosette and cauline leaves, shoots, stems, flower buds and siliques.

Its subcellular location is the nucleus. Its function is as follows. Transcriptional repressor that regulates multiple aspects of plant growth and development through the regulation of BEL1-LIKE (BLH) and KNOX TALE (KNAT) homeodomain transcription factors. The chain is Transcription repressor OFP8 (OFP8) from Arabidopsis thaliana (Mouse-ear cress).